A 718-amino-acid polypeptide reads, in one-letter code: Methionine--tRNA ligase (718 aa).

A 'HIGH' region motif is present at residues 27-37; that stretch reads PYANGQIHIGH. Positions 158, 161, 171, and 174 each coordinate Zn(2+). Residues 348–352 carry the 'KMSKS' region motif; sequence KMSKS. Lysine 351 serves as a coordination point for ATP. Residues 612–718 enclose the tRNA-binding domain; it reads DFAKIDLRIA…SGAKPGMRVK (107 aa).

Belongs to the class-I aminoacyl-tRNA synthetase family. MetG type 1 subfamily. As to quaternary structure, homodimer. Requires Zn(2+) as cofactor.

Its subcellular location is the cytoplasm. The catalysed reaction is tRNA(Met) + L-methionine + ATP = L-methionyl-tRNA(Met) + AMP + diphosphate. Functionally, is required not only for elongation of protein synthesis but also for the initiation of all mRNA translation through initiator tRNA(fMet) aminoacylation. This is Methionine--tRNA ligase from Burkholderia orbicola (strain AU 1054).